Here is a 355-residue protein sequence, read N- to C-terminus: tRNA-specific 2-thiouridylase MnmA (355 aa).

Residues 6 to 13 (AMSGGVDS) and Met-32 contribute to the ATP site. Cys-93 functions as the Nucleophile in the catalytic mechanism. Cys-93 and Cys-191 are joined by a disulfide. ATP is bound at residue Gly-117. The interaction with tRNA stretch occupies residues 140–142 (KDQ). Cys-191 functions as the Cysteine persulfide intermediate in the catalytic mechanism. Positions 296 to 297 (RY) are interaction with tRNA.

This sequence belongs to the MnmA/TRMU family.

Its subcellular location is the cytoplasm. The catalysed reaction is S-sulfanyl-L-cysteinyl-[protein] + uridine(34) in tRNA + AH2 + ATP = 2-thiouridine(34) in tRNA + L-cysteinyl-[protein] + A + AMP + diphosphate + H(+). Functionally, catalyzes the 2-thiolation of uridine at the wobble position (U34) of tRNA, leading to the formation of s(2)U34. The chain is tRNA-specific 2-thiouridylase MnmA from Pelobacter propionicus (strain DSM 2379 / NBRC 103807 / OttBd1).